Consider the following 374-residue polypeptide: Glutamate 5-kinase (374 aa).

Lysine 9 provides a ligand contact to ATP. Substrate is bound by residues serine 49, aspartate 136, and asparagine 148. ATP contacts are provided by residues 168-169 (TD) and 210-216 (TGGMRSK). The 79-residue stretch at 276–354 (SGTITVDSGA…EEARQYSYLH (79 aa)) folds into the PUA domain.

This sequence belongs to the glutamate 5-kinase family.

The protein resides in the cytoplasm. The enzyme catalyses L-glutamate + ATP = L-glutamyl 5-phosphate + ADP. It functions in the pathway amino-acid biosynthesis; L-proline biosynthesis; L-glutamate 5-semialdehyde from L-glutamate: step 1/2. Functionally, catalyzes the transfer of a phosphate group to glutamate to form L-glutamate 5-phosphate. In Geobacillus thermodenitrificans (strain NG80-2), this protein is Glutamate 5-kinase.